A 484-amino-acid chain; its full sequence is Poly(A) RNA polymerase GLD2 (484 aa).

2 positions are modified to phosphoserine: Ser-62 and Ser-69. The Nuclear localization signal motif lies at 76–92 (KRISDEKAFRLDGKRQR). The residue at position 95 (Ser-95) is a Phosphoserine. Positions 213 and 215 each coordinate Mg(2+). In terms of domain architecture, PAP-associated spans 386–440 (SLGDLLLGFLKYYATEFDWNTQMISVREAKAIPRPDDMEWRNKYICVEEPFDGTN).

It belongs to the DNA polymerase type-B-like family. GLD2 subfamily. In terms of assembly, interacts with CPEB1, CPEB2, CPSF1 and PABPC1. Interacts with QKI isoform QKI7; promoting recruitment to miRNA miR-122 and miR-122 stabilization. Requires Mg(2+) as cofactor. Mn(2+) serves as cofactor.

The protein resides in the cytoplasm. Its subcellular location is the nucleus. The catalysed reaction is RNA(n) + ATP = RNA(n)-3'-adenine ribonucleotide + diphosphate. Cytoplasmic poly(A) RNA polymerase that adds successive AMP monomers to the 3'-end of specific RNAs, forming a poly(A) tail. In contrast to the canonical nuclear poly(A) RNA polymerase, it only adds poly(A) to selected cytoplasmic mRNAs. Does not play a role in replication-dependent histone mRNA degradation. Adds a single nucleotide to the 3' end of specific miRNAs, monoadenylation stabilizes and prolongs the activity of some but not all miRNAs. This chain is Poly(A) RNA polymerase GLD2, found in Rattus norvegicus (Rat).